The chain runs to 365 residues: Cobalt-precorrin-5B C(1)-methyltransferase (365 aa).

It belongs to the CbiD family.

It carries out the reaction Co-precorrin-5B + S-adenosyl-L-methionine = Co-precorrin-6A + S-adenosyl-L-homocysteine. It participates in cofactor biosynthesis; adenosylcobalamin biosynthesis; cob(II)yrinate a,c-diamide from sirohydrochlorin (anaerobic route): step 6/10. Its function is as follows. Catalyzes the methylation of C-1 in cobalt-precorrin-5B to form cobalt-precorrin-6A. The protein is Cobalt-precorrin-5B C(1)-methyltransferase of Geobacillus sp. (strain WCH70).